The primary structure comprises 587 residues: L-ascorbate oxidase (587 aa).

Positions Met1 to Ala33 are cleaved as a signal peptide. Plastocyanin-like domains are found at residues Ile38–Asp157 and Asp169–Pro335. 3 disulfides stabilise this stretch: Cys54–Cys236, Cys116–Cys574, and Cys215–Cys228. Cu cation-binding residues include His95, His97, His139, and His141. Asn360, Asn401, and Asn475 each carry an N-linked (GlcNAc...) asparagine glycan. A Plastocyanin-like 3 domain is found at Asn379 to Glu559. Residues His480, His483, His485, His542, Cys543, His544, His548, and Met553 each coordinate Cu cation.

The protein belongs to the multicopper oxidase family. As to quaternary structure, dimer. Cu cation is required as a cofactor.

Its subcellular location is the secreted. It catalyses the reaction 4 L-ascorbate + O2 = 4 monodehydro-L-ascorbate radical + 2 H2O. May be involved in a redox system involving ascorbic acid. This is L-ascorbate oxidase from Cucumis sativus (Cucumber).